A 202-amino-acid chain; its full sequence is Xanthine phosphoribosyltransferase (202 aa).

Xanthine contacts are provided by Leu20 and Asn27. 128-132 is a binding site for 5-phospho-alpha-D-ribose 1-diphosphate; it reads ANGEA. Residue Lys156 participates in xanthine binding.

Belongs to the purine/pyrimidine phosphoribosyltransferase family. Xpt subfamily. In terms of assembly, homodimer.

It localises to the cytoplasm. It catalyses the reaction XMP + diphosphate = xanthine + 5-phospho-alpha-D-ribose 1-diphosphate. Its pathway is purine metabolism; XMP biosynthesis via salvage pathway; XMP from xanthine: step 1/1. Converts the preformed base xanthine, a product of nucleic acid breakdown, to xanthosine 5'-monophosphate (XMP), so it can be reused for RNA or DNA synthesis. This Alkaliphilus metalliredigens (strain QYMF) protein is Xanthine phosphoribosyltransferase.